Here is a 199-residue protein sequence, read N- to C-terminus: B3 domain-containing protein Os06g0107800 (199 aa).

The interval 13–32 is disordered; sequence QLQGGGGGHGGGGGGGGGER. A compositionally biased stretch (gly residues) spans 15–29; sequence QGGGGGHGGGGGGGG. Residues 37–141 constitute a DNA-binding region (TF-B3); it reads FEKVVTPSDV…RLFIDCRKRA (105 aa).

The protein localises to the nucleus. The sequence is that of B3 domain-containing protein Os06g0107800 from Oryza sativa subsp. japonica (Rice).